Here is a 248-residue protein sequence, read N- to C-terminus: Leucyl/phenylalanyl-tRNA--protein transferase (248 aa).

The protein belongs to the L/F-transferase family.

It localises to the cytoplasm. It carries out the reaction N-terminal L-lysyl-[protein] + L-leucyl-tRNA(Leu) = N-terminal L-leucyl-L-lysyl-[protein] + tRNA(Leu) + H(+). It catalyses the reaction N-terminal L-arginyl-[protein] + L-leucyl-tRNA(Leu) = N-terminal L-leucyl-L-arginyl-[protein] + tRNA(Leu) + H(+). The catalysed reaction is L-phenylalanyl-tRNA(Phe) + an N-terminal L-alpha-aminoacyl-[protein] = an N-terminal L-phenylalanyl-L-alpha-aminoacyl-[protein] + tRNA(Phe). Its function is as follows. Functions in the N-end rule pathway of protein degradation where it conjugates Leu, Phe and, less efficiently, Met from aminoacyl-tRNAs to the N-termini of proteins containing an N-terminal arginine or lysine. In Ralstonia pickettii (strain 12J), this protein is Leucyl/phenylalanyl-tRNA--protein transferase.